The following is a 1774-amino-acid chain: U3 small nucleolar RNA-associated protein 10 (1774 aa).

A disordered region spans residues 1206–1226 (YDKHSSAGSNDEEAGSESEAE). Acidic residues predominate over residues 1215-1226 (NDEEAGSESEAE). The HEAT repeat unit spans residues 1734-1772 (LVPIIAELLEDEDEEVEYEVRSGLVKVVESVMGEPFDRY).

The protein belongs to the HEATR1/UTP10 family. Component of the ribosomal small subunit (SSU) processome.

It is found in the nucleus. The protein resides in the nucleolus. Involved in nucleolar processing of pre-18S ribosomal RNA. Involved in ribosome biosynthesis. This Kluyveromyces lactis (strain ATCC 8585 / CBS 2359 / DSM 70799 / NBRC 1267 / NRRL Y-1140 / WM37) (Yeast) protein is U3 small nucleolar RNA-associated protein 10.